The chain runs to 60 residues: UPF0291 protein Nther_1806 (60 aa).

Belongs to the UPF0291 family.

The protein localises to the cytoplasm. This is UPF0291 protein Nther_1806 from Natranaerobius thermophilus (strain ATCC BAA-1301 / DSM 18059 / JW/NM-WN-LF).